The sequence spans 336 residues: Polyprenyl transferase dpasC (336 aa).

The chain crosses the membrane as a helical span at residues 34–54; sequence LFTIFAGGMFLFVASFPTTAF. N-linked (GlcNAc...) asparagine glycosylation occurs at Asn66. The next 7 helical transmembrane spans lie at 80–100, 125–145, 181–201, 205–225, 253–273, 274–294, and 311–331; these read ALCL…NDWI, QAML…HFML, YILG…IFHG, FAES…WTIF, HVHL…PMYL, NQFH…LSLL, and LHVD…IELL.

Belongs to the UbiA prenyltransferase family. Mg(2+) is required as a cofactor.

The protein localises to the membrane. Its pathway is secondary metabolite biosynthesis; terpenoid biosynthesis. In terms of biological role, polyprenyl transferase; part of the gene cluster that mediates the biosynthesis of the diterpenoid pyrones subglutinols A and B. The first step of the pathway is the synthesis of the alpha-pyrone moiety by the polyketide synthase dpasA via condensation of one acetyl-CoA starter unit with 3 malonyl-CoA units and 2 methylations. The alpha-pyrone is then combined with geranylgeranyl pyrophosphate (GGPP) formed by the GGPP synthase dpasD through the action of the prenyltransferase dpasC to yield a linear alpha-pyrone diterpenoid. Subsequent steps in the diterpenoid pyrone biosynthetic pathway involve the decalin core formation, which is initiated by the epoxidation of the C10-C11 olefin by the FAD-dependent oxidoreductase dpasE, and is followed by a cyclization cascade catalyzed by the terpene cyclase dpasB. The FAD-linked oxidoreductase dpasF is then involved in tetrahydrofuran (THF) ring formation at the C5 unit to complete the formation of subglutinols A and B. DpasF possesses also an additional catalytic ability of multi-step oxidations to generate a new DDP analog with an enone system at the C5 named FDDP A. This Apiospora sacchari (Arthrinium sacchari) protein is Polyprenyl transferase dpasC.